A 329-amino-acid chain; its full sequence is 4-diphosphocytidyl-2-C-methyl-D-erythritol kinase (329 aa).

K14 is an active-site residue. An ATP-binding site is contributed by 117-127 (PSGAGMGGASS). D166 is a catalytic residue.

This sequence belongs to the GHMP kinase family. IspE subfamily.

The catalysed reaction is 4-CDP-2-C-methyl-D-erythritol + ATP = 4-CDP-2-C-methyl-D-erythritol 2-phosphate + ADP + H(+). It participates in isoprenoid biosynthesis; isopentenyl diphosphate biosynthesis via DXP pathway; isopentenyl diphosphate from 1-deoxy-D-xylulose 5-phosphate: step 3/6. Catalyzes the phosphorylation of the position 2 hydroxy group of 4-diphosphocytidyl-2C-methyl-D-erythritol. The sequence is that of 4-diphosphocytidyl-2-C-methyl-D-erythritol kinase from Rhodopirellula baltica (strain DSM 10527 / NCIMB 13988 / SH1).